A 1397-amino-acid chain; its full sequence is DNA-directed RNA polymerase subunit beta' (1397 aa).

Zn(2+) is bound by residues cysteine 75, cysteine 77, cysteine 90, and cysteine 93. Positions 465, 467, and 469 each coordinate Mg(2+). Positions 819, 893, 900, and 903 each coordinate Zn(2+).

Belongs to the RNA polymerase beta' chain family. The RNAP catalytic core consists of 2 alpha, 1 beta, 1 beta' and 1 omega subunit. When a sigma factor is associated with the core the holoenzyme is formed, which can initiate transcription. Mg(2+) serves as cofactor. Zn(2+) is required as a cofactor.

The enzyme catalyses RNA(n) + a ribonucleoside 5'-triphosphate = RNA(n+1) + diphosphate. DNA-dependent RNA polymerase catalyzes the transcription of DNA into RNA using the four ribonucleoside triphosphates as substrates. The sequence is that of DNA-directed RNA polymerase subunit beta' from Acinetobacter baumannii (strain ACICU).